Reading from the N-terminus, the 238-residue chain is Pyruvate formate-lyase-activating enzyme (238 aa).

One can recognise a Radical SAM core domain in the interval 15–236 (VDGPGIRTVV…KKLEKYLKEL (222 aa)). Residues Cys-29, Cys-33, and Cys-36 each coordinate [4Fe-4S] cluster. S-adenosyl-L-methionine contacts are provided by residues 35-37 (YCH), Gly-78, 126-128 (DIK), and His-199.

Belongs to the organic radical-activating enzymes family. [4Fe-4S] cluster serves as cofactor.

The protein localises to the cytoplasm. The catalysed reaction is glycyl-[formate C-acetyltransferase] + reduced [flavodoxin] + S-adenosyl-L-methionine = glycin-2-yl radical-[formate C-acetyltransferase] + semiquinone [flavodoxin] + 5'-deoxyadenosine + L-methionine + H(+). Activation of pyruvate formate-lyase under anaerobic conditions by generation of an organic free radical, using S-adenosylmethionine and reduced flavodoxin as cosubstrates to produce 5'-deoxy-adenosine. The protein is Pyruvate formate-lyase-activating enzyme (act) of Clostridium pasteurianum.